We begin with the raw amino-acid sequence, 275 residues long: Adenylate kinase 2 (275 aa).

Residue Gly-2 is the site of N-myristoyl glycine attachment. The tract at residues 21 to 30 is required for cell membrane translocation but dispensable for cell membrane localization; the sequence is KKKEKKKKKK. 39-44 provides a ligand contact to ATP; that stretch reads GSGKDT. The segment at 59 to 97 is NMP; that stretch reads CISKLLKEYKEEYNKENVLNEEENYFDEIEKCMIDGSLV. AMP is bound by residues 95–97, 126–129, and Gln-133; these read SLV and GFPR. Arg-164 serves as a coordination point for ATP. The segment at 165 to 214 is LID; sequence IIDPITNISYNENIIQIIKKKREGQELSDKEQKQLIIDNHLYNNLSNDIL. AMP is bound by residues Arg-220 and Arg-231.

This sequence belongs to the adenylate kinase family. As to quaternary structure, monomer. Oligomer. Heterodimer composed of NMT and AK2; AK2 myristoylation stabilizes the complex. In terms of processing, myristoylation is required for cell membrane localization. May be palmitoylated at Cys-4 which stabilizes cell membrane localization of the myristoylated protein.

Its subcellular location is the parasitophorous vacuole membrane. The enzyme catalyses AMP + ATP = 2 ADP. Its function is as follows. Catalyzes the reversible transfer of the terminal phosphate group between ATP and AMP. Has very low activity with CTP, GTP, ITP and UTP and no activity with GMP, UMP or IMP in vitro. The protein is Adenylate kinase 2 of Plasmodium falciparum (isolate 3D7).